The primary structure comprises 251 residues: Triosephosphate isomerase (251 aa).

9–11 is a binding site for substrate; that stretch reads NWK. Catalysis depends on His-95, which acts as the Electrophile. The active-site Proton acceptor is the Glu-167. Substrate is bound by residues Gly-173, Ser-213, and 234-235; that span reads GG. A Phosphoserine modification is found at Ser-213.

This sequence belongs to the triosephosphate isomerase family. As to quaternary structure, homodimer.

Its subcellular location is the cytoplasm. The enzyme catalyses D-glyceraldehyde 3-phosphate = dihydroxyacetone phosphate. Its pathway is carbohydrate biosynthesis; gluconeogenesis. It functions in the pathway carbohydrate degradation; glycolysis; D-glyceraldehyde 3-phosphate from glycerone phosphate: step 1/1. Its function is as follows. Involved in the gluconeogenesis. Catalyzes stereospecifically the conversion of dihydroxyacetone phosphate (DHAP) to D-glyceraldehyde-3-phosphate (G3P). The polypeptide is Triosephosphate isomerase (Bacillus mycoides (strain KBAB4) (Bacillus weihenstephanensis)).